Reading from the N-terminus, the 273-residue chain is Putative carboxypeptidase YodJ (273 aa).

A signal peptide spans 1-23 (MKKSGKWFSLAAALSVTAIVGAG). C24 is lipidated: N-palmitoyl cysteine. The S-diacylglycerol cysteine moiety is linked to residue C24. Residues 27 to 58 (SNGDAQKDTKTTAETKQTEQKTADSKKSNTQN) are disordered. Residues 31-53 (AQKDTKTTAETKQTEQKTADSKK) are compositionally biased toward basic and acidic residues.

The protein belongs to the peptidase M15B family.

Its subcellular location is the cell membrane. The polypeptide is Putative carboxypeptidase YodJ (yodJ) (Bacillus subtilis (strain 168)).